The following is a 117-amino-acid chain: MLLRKTLKNPFIANWTSKGNTLCLGHWEIQYLNTTLILPPERREKDMGTQGIYYFIDPEDRLYLEGLDEDDWILANIDWLSDVFIQANIPLEEPYLRQFYQAVNQEDWRCGSCGGCL.

This is an uncharacterized protein from Pasteurella multocida (strain Pm70).